A 189-amino-acid polypeptide reads, in one-letter code: UPF0301 protein PputW619_0469 (189 aa).

This sequence belongs to the UPF0301 (AlgH) family.

The polypeptide is UPF0301 protein PputW619_0469 (Pseudomonas putida (strain W619)).